Consider the following 190-residue polypeptide: dCTP deaminase, dUMP-forming (190 aa).

DCTP-binding positions include 101–106 (KSSLGR), aspartate 119, 127–129 (TLE), glutamine 148, tyrosine 162, and glutamine 174. Catalysis depends on glutamate 129, which acts as the Proton donor/acceptor. A disordered region spans residues 163–190 (GSSQVGSKYQGQRGPTPSKSYQNFVKSN).

This sequence belongs to the dCTP deaminase family. As to quaternary structure, homotrimer.

The enzyme catalyses dCTP + 2 H2O = dUMP + NH4(+) + diphosphate. It functions in the pathway pyrimidine metabolism; dUMP biosynthesis; dUMP from dCTP: step 1/1. Bifunctional enzyme that catalyzes both the deamination of dCTP to dUTP and the hydrolysis of dUTP to dUMP without releasing the toxic dUTP intermediate. The protein is dCTP deaminase, dUMP-forming of Mycolicibacterium gilvum (strain PYR-GCK) (Mycobacterium gilvum (strain PYR-GCK)).